A 323-amino-acid polypeptide reads, in one-letter code: Sphingolipid delta(4)-desaturase/C4-monooxygenase DES2 (323 aa).

Residue Gly-2 is the site of N-myristoyl glycine attachment. Transmembrane regions (helical) follow at residues 45-65 (WAVL…RGLA) and 68-88 (WLLF…TLAI). The Histidine box-1 motif lies at 89-93 (HDISH). The tract at residues 95-99 (AAFGT) is required for C4-hydroxylase activity. The Histidine box-2 signature appears at 128-132 (HVDHH). A helical transmembrane segment spans residues 210-231 (VYLLASSFLGLGLHPISGHFVA). A Histidine box-3 motif is present at residues 259 to 263 (HVEHH).

It belongs to the fatty acid desaturase type 1 family. DEGS subfamily. In terms of tissue distribution, highly expressed in skin, intestine and kidney.

The protein localises to the endoplasmic reticulum membrane. It catalyses the reaction a dihydroceramide + 2 Fe(II)-[cytochrome b5] + O2 + 2 H(+) = a phytoceramide + 2 Fe(III)-[cytochrome b5] + H2O. The catalysed reaction is an N-acylsphinganine + 2 Fe(II)-[cytochrome b5] + O2 + 2 H(+) = an N-acylsphing-4-enine + 2 Fe(III)-[cytochrome b5] + 2 H2O. It carries out the reaction N-octanoylsphinganine + 2 Fe(II)-[cytochrome b5] + O2 + 2 H(+) = N-octanoyl-4-hydroxysphinganine + 2 Fe(III)-[cytochrome b5] + H2O. The enzyme catalyses an N-acylsphinganine + 2 Fe(II)-[cytochrome b5] + O2 + 2 H(+) = an N-acyl-(4R)-4-hydroxysphinganine + 2 Fe(III)-[cytochrome b5] + H2O. The protein operates within membrane lipid metabolism; sphingolipid biosynthesis. Functionally, bifunctional enzyme which acts both as a sphingolipid delta(4)-desaturase and a sphingolipid C4-monooxygenase. The polypeptide is Sphingolipid delta(4)-desaturase/C4-monooxygenase DES2 (Homo sapiens (Human)).